Consider the following 77-residue polypeptide: Large ribosomal subunit protein bL28 (77 aa).

The segment at 1 to 20 is disordered; that stretch reads MSRVCQVTGKGPVTGNNISH.

The protein belongs to the bacterial ribosomal protein bL28 family.

This Pseudomonas fluorescens (strain SBW25) protein is Large ribosomal subunit protein bL28.